The sequence spans 193 residues: 3-isopropylmalate dehydratase small subunit (193 aa).

It belongs to the LeuD family. LeuD type 1 subfamily. Heterodimer of LeuC and LeuD.

The enzyme catalyses (2R,3S)-3-isopropylmalate = (2S)-2-isopropylmalate. It functions in the pathway amino-acid biosynthesis; L-leucine biosynthesis; L-leucine from 3-methyl-2-oxobutanoate: step 2/4. Catalyzes the isomerization between 2-isopropylmalate and 3-isopropylmalate, via the formation of 2-isopropylmaleate. The sequence is that of 3-isopropylmalate dehydratase small subunit from Listeria monocytogenes serotype 4b (strain CLIP80459).